Here is a 226-residue protein sequence, read N- to C-terminus: Xanthocillin biosynthesis cluster protein F (226 aa).

It participates in secondary metabolite biosynthesis. In terms of biological role, part of the gene cluster that mediates the biosynthesis of the isocyanide xanthocillin and its derivatives. The first step of the pathway consists in the conversion of tyrosine into a vinyl-isonitrile intermediate by the isocyanide synthase xanB. Subsequent oxidative dimerization of this intermediate to form xanthocillin may involve the cytochrome P450 monooxygenase xanG, whose expression is coregulated with that of XanB. Xanthocillin can be further modified by the isonitrile hydratase-like protein xanA which introduces N-formyl groups and the methyltransferase xanE which introduces methyl groups, leading to the production of several derivatives including fumiformamide. Finally, fumiformamide can be subject to both oxidative and reductive cyclization to yield melanocins E and F, respectively. This is Xanthocillin biosynthesis cluster protein F from Aspergillus fumigatus (strain ATCC MYA-4609 / CBS 101355 / FGSC A1100 / Af293) (Neosartorya fumigata).